The following is a 314-amino-acid chain: DNA-directed RNA polymerase subunit alpha (314 aa).

Positions 1–228 are alpha N-terminal domain (alpha-NTD); it reads MIEIEKPKIE…EHLNIFVGLT (228 aa). The interval 245–314 is alpha C-terminal domain (alpha-CTD); it reads KEKVLEMTIE…ELGLSLRKDD (70 aa).

The protein belongs to the RNA polymerase alpha chain family. In terms of assembly, homodimer. The RNAP catalytic core consists of 2 alpha, 1 beta, 1 beta' and 1 omega subunit. When a sigma factor is associated with the core the holoenzyme is formed, which can initiate transcription.

The enzyme catalyses RNA(n) + a ribonucleoside 5'-triphosphate = RNA(n+1) + diphosphate. In terms of biological role, DNA-dependent RNA polymerase catalyzes the transcription of DNA into RNA using the four ribonucleoside triphosphates as substrates. This chain is DNA-directed RNA polymerase subunit alpha, found in Geobacillus thermodenitrificans (strain NG80-2).